Consider the following 813-residue polypeptide: Envelope glycoprotein H (813 aa).

Residues 1-18 (MGLPGSIVFLIMIHAFCA) form the signal peptide. Topologically, residues 19–769 (KKTPTNTLPS…ESERVTIISA (751 aa)) are virion surface. N-linked (GlcNAc...) asparagine; by host glycans are attached at residues Asn-62 and Asn-116. The tract at residues 135-159 (DRSGLKLDDKDDAQPTGTNPPTELK) is disordered. The segment covering 137–147 (SGLKLDDKDDA) has biased composition (basic and acidic residues). Residues 212 to 273 (DGAEVIMKIG…FTRRPYLIYL (62 aa)) are interaction with gL. N-linked (GlcNAc...) asparagine; by host glycans are attached at residues Asn-247, Asn-279, Asn-410, Asn-434, Asn-469, Asn-576, Asn-727, and Asn-750. A helical membrane pass occupies residues 770-790 (TYVATATAGASIAISIAIITV). The Intravirion portion of the chain corresponds to 791–813 (RMIINNFRYNYHRYKKLSLYDDL).

It belongs to the herpesviridae glycoprotein H family. In terms of assembly, interacts with glycoprotein L (gL); this interaction is necessary for the correct processing and cell surface expression of gH. The heterodimer gH/gL seems to interact with gB trimers during fusion. N-glycosylated, O-glycosylated, and sialylated.

Its subcellular location is the virion membrane. The protein resides in the host cell membrane. The protein localises to the host endosome membrane. Functionally, the heterodimer glycoprotein H-glycoprotein L is required for the fusion of viral and plasma membranes leading to virus entry into the host cell. Following initial binding to host receptor, membrane fusion is mediated by the fusion machinery composed of gB and the heterodimer gH/gL. May also be involved in the fusion between the virion envelope and the outer nuclear membrane during virion morphogenesis. The sequence is that of Envelope glycoprotein H from Gallus gallus (Chicken).